Here is a 153-residue protein sequence, read N- to C-terminus: MARNTLSSRFRRVDIDEFDENKFVDEQEEAAAAAGEPGPDPSEVDGLLRQGDMLRAFHAALRNSPVNTKNQAVKERAQGVVLKVLTNFKSSEIEQAVQSLDRNGIDLLMKYIYKGFEKPTENSSAVLLQWHEKALAVGGLGSIIRVLTARKTV.

Ser-64 carries the phosphoserine modification.

This sequence belongs to the ARPC5 family. In terms of assembly, may be a component of the Arp2/3 complex in which it may replace ARPC5.

It is found in the cytoplasm. Its subcellular location is the cytoskeleton. The protein localises to the cell projection. Functionally, may function as component of the Arp2/3 complex which is involved in regulation of actin polymerization and together with an activating nucleation-promoting factor (NPF) mediates the formation of branched actin networks. The polypeptide is Actin-related protein 2/3 complex subunit 5-like protein (ARPC5L) (Bos taurus (Bovine)).